A 122-amino-acid polypeptide reads, in one-letter code: Large ribosomal subunit protein uL14 (122 aa).

Belongs to the universal ribosomal protein uL14 family. Part of the 50S ribosomal subunit. Forms a cluster with proteins L3 and L19. In the 70S ribosome, L14 and L19 interact and together make contacts with the 16S rRNA in bridges B5 and B8.

Binds to 23S rRNA. Forms part of two intersubunit bridges in the 70S ribosome. This chain is Large ribosomal subunit protein uL14, found in Beutenbergia cavernae (strain ATCC BAA-8 / DSM 12333 / CCUG 43141 / JCM 11478 / NBRC 16432 / NCIMB 13614 / HKI 0122).